Here is a 30-residue protein sequence, read N- to C-terminus: Trypsin inhibitor 1 (30 aa).

Disulfide bonds link C4/C21, C11/C23, and C17/C29.

Belongs to the protease inhibitor I7 (squash-type serine protease inhibitor) family.

The protein localises to the secreted. Its function is as follows. Inhibits trypsin. This is Trypsin inhibitor 1 from Citrullus lanatus (Watermelon).